A 198-amino-acid chain; its full sequence is MICOS complex subunit MIC26 (198 aa).

The first 25 residues, 1–25 (MFKVIQRSVGPASLSLLTFKVYAAP), serve as a signal peptide directing secretion. The chain crosses the membrane as a helical span at residues 108-128 (PGFFPRLGVIGFAGLIGLLLA). O-linked (Xyl...) (chondroitin sulfate) serine glycosylation occurs at Ser162.

Belongs to the apolipoprotein O/MICOS complex subunit Mic27 family. As to quaternary structure, component of the mitochondrial contact site and cristae organizing system (MICOS) complex, composed of at least MICOS10/MIC10, CHCHD3/MIC19, CHCHD6/MIC25, APOOL/MIC27, IMMT/MIC60, APOO/MIC23/MIC26 and MICOS13/MIC13. This complex was also known under the names MINOS or MitOS complex. he MICOS complex associates with mitochondrial outer membrane proteins SAMM50, MTX1 and MTX2 (together described as components of the mitochondrial outer membrane sorting assembly machinery (SAM) complex) and DNAJC11, mitochondrial inner membrane protein TMEM11 and with HSPA9. The MICOS and SAM complexes together with DNAJC11 are part of a large protein complex spanning both membranes termed the mitochondrial intermembrane space bridging (MIB) complex. Interacts with IMMT/MIC60. Interacts with MICOS10/MIC10 and APOOL/MIC27. O-glycosylation; glycosaminoglycan of chondroitin-sulfate type. As to expression, expressed in all tissues examined. Up-regulated in diabetic heart.

Its subcellular location is the mitochondrion inner membrane. The protein resides in the secreted. The protein localises to the mitochondrion. It localises to the golgi apparatus membrane. It is found in the endoplasmic reticulum membrane. Functionally, component of the MICOS complex, a large protein complex of the mitochondrial inner membrane that plays crucial roles in the maintenance of crista junctions, inner membrane architecture, and formation of contact sites to the outer membrane. Plays a crucial role in crista junction formation and mitochondrial function. Can promote cardiac lipotoxicity by enhancing mitochondrial respiration and fatty acid metabolism in cardiac myoblasts. Promotes cholesterol efflux from macrophage cells. Detected in HDL, LDL and VLDL. Secreted by a microsomal triglyceride transfer protein (MTTP)-dependent mechanism, probably as a VLDL-associated protein that is subsequently transferred to HDL. This chain is MICOS complex subunit MIC26 (APOO), found in Homo sapiens (Human).